A 523-amino-acid chain; its full sequence is Ribonuclease Y (523 aa).

The chain crosses the membrane as a helical span at residues 18 to 38 (WSLTVALVIGGALGFLVVWAF). Positions 213–276 (TSTIVSLPNE…EVARGALEAL (64 aa)) constitute a KH domain. The HD domain occupies 339–432 (VLDHSVETAS…VILADTISAT (94 aa)).

The protein belongs to the RNase Y family.

Its subcellular location is the cell membrane. Its function is as follows. Endoribonuclease that initiates mRNA decay. The protein is Ribonuclease Y of Opitutus terrae (strain DSM 11246 / JCM 15787 / PB90-1).